A 364-amino-acid chain; its full sequence is DNA polymerase IV (364 aa).

Residues 14–198 form the UmuC domain; the sequence is IIHIDMDAFF…LPIEKFHGVG (185 aa). Residues Asp18 and Asp116 each coordinate Mg(2+). The active site involves Glu117.

The protein belongs to the DNA polymerase type-Y family. In terms of assembly, monomer. It depends on Mg(2+) as a cofactor.

The protein resides in the cytoplasm. The catalysed reaction is DNA(n) + a 2'-deoxyribonucleoside 5'-triphosphate = DNA(n+1) + diphosphate. In terms of biological role, poorly processive, error-prone DNA polymerase involved in untargeted mutagenesis. Copies undamaged DNA at stalled replication forks, which arise in vivo from mismatched or misaligned primer ends. These misaligned primers can be extended by PolIV. Exhibits no 3'-5' exonuclease (proofreading) activity. May be involved in translesional synthesis, in conjunction with the beta clamp from PolIII. The protein is DNA polymerase IV of Streptococcus pyogenes serotype M12 (strain MGAS2096).